We begin with the raw amino-acid sequence, 124 residues long: UPF0102 protein HEAR0176 (124 aa).

Belongs to the UPF0102 family.

This Herminiimonas arsenicoxydans protein is UPF0102 protein HEAR0176.